The sequence spans 120 residues: uncharacterized protein (120 aa).

Residues 45–78 adopt a coiled-coil conformation; the sequence is QLISESLKIAQKDLMEVRKELRKRKIAIRETERD.

This is an uncharacterized protein from Bacillus subtilis (strain 168).